The chain runs to 208 residues: Transmembrane protein 222 (208 aa).

Positions 1 to 34 (MAEAEGSSPLLLQPPPPPPRMAEVETPTGAETDM) are disordered. Residues 1–55 (MAEAEGSSPLLLQPPPPPPRMAEVETPTGAETDMKQYHGSGGVVMDVERSRFPYC) are Extracellular-facing. A helical transmembrane segment spans residues 56–76 (VVWTPIPVLTWFFPIIGHMGI). Residues 77-164 (CTSAGVIRDF…MRYNNSTNWN (88 aa)) are Cytoplasmic-facing. A helical membrane pass occupies residues 165–185 (MVTLCCFCLIYGKYVSVGAFV). Lysine 186 is a topological domain (extracellular). Residues 187-207 (TWLPFVLLLGIILTVSLVFNL) form a helical membrane-spanning segment. A topological domain (cytoplasmic) is located at residue arginine 208.

The protein resides in the membrane. It is found in the cell projection. It localises to the dendrite. In Mus musculus (Mouse), this protein is Transmembrane protein 222 (Tmem222).